The primary structure comprises 316 residues: HPr kinase/phosphorylase (316 aa).

Catalysis depends on residues histidine 143 and lysine 164. Glycine 158–serine 165 serves as a coordination point for ATP. Serine 165 is a Mg(2+) binding site. Aspartate 182 (proton acceptor; for phosphorylation activity. Proton donor; for dephosphorylation activity) is an active-site residue. An important for the catalytic mechanism of both phosphorylation and dephosphorylation region spans residues leucine 206–asparagine 215. Mg(2+) is bound at residue glutamate 207. Arginine 251 is an active-site residue. An important for the catalytic mechanism of dephosphorylation region spans residues proline 272 to arginine 277.

The protein belongs to the HPrK/P family. In terms of assembly, homohexamer. Requires Mg(2+) as cofactor.

It carries out the reaction [HPr protein]-L-serine + ATP = [HPr protein]-O-phospho-L-serine + ADP + H(+). The catalysed reaction is [HPr protein]-O-phospho-L-serine + phosphate + H(+) = [HPr protein]-L-serine + diphosphate. Functionally, catalyzes the ATP- as well as the pyrophosphate-dependent phosphorylation of a specific serine residue in HPr, a phosphocarrier protein of the phosphoenolpyruvate-dependent sugar phosphotransferase system (PTS). HprK/P also catalyzes the pyrophosphate-producing, inorganic phosphate-dependent dephosphorylation (phosphorolysis) of seryl-phosphorylated HPr (P-Ser-HPr). The sequence is that of HPr kinase/phosphorylase from Xanthomonas campestris pv. campestris (strain 8004).